Here is a 287-residue protein sequence, read N- to C-terminus: Urease accessory protein UreD (287 aa).

This sequence belongs to the UreD family. In terms of assembly, ureD, UreF and UreG form a complex that acts as a GTP-hydrolysis-dependent molecular chaperone, activating the urease apoprotein by helping to assemble the nickel containing metallocenter of UreC. The UreE protein probably delivers the nickel.

Its subcellular location is the cytoplasm. Functionally, required for maturation of urease via the functional incorporation of the urease nickel metallocenter. The chain is Urease accessory protein UreD from Ureaplasma parvum serovar 3 (strain ATCC 27815 / 27 / NCTC 11736).